A 353-amino-acid chain; its full sequence is MIVNLSRLGKSGTGMWQYSIKFLTALREIADVDAIICSKVHADYFEKLGYAVVTVPNIVSNTSKTSRLRPLVWYVYSYWLALRVLIKFGNKKLVCTTHHTIPLLRNQTITVHDIRPFYYPDSFIQKVYFRFLLKMSVKRCKHVLTVSYTVKDSIAKTYNVDSEKISVIYNSVNKSDFIQKKEKENYFLAVGASWPHKNIHSFIKNKKVWSDSYNLIIVCGRTDYAMSLQQMVVDLELKDKVTFLHEVSFNELKILYSKAYALVYPSIDEGFGIPPIEAMASNTPVIVSDIPVFHEVLTNGALYVNPDDEKSWQSAIKNIEQLPDAISRFNNYVARYDFDNMKQMVGNWLAESK.

This sequence belongs to the glycosyltransferase group 1 family. Glycosyltransferase 4 subfamily.

It catalyses the reaction alpha-L-rhamnosyl-(1-&gt;3)-alpha-D-galactosyl-1-diphospho-di-trans,octa-cis-undecaprenol + GDP-alpha-D-mannose = alpha-D-Man-(1-&gt;4)-alpha-L-Rha-(1-&gt;3)-alpha-D-Gal-di-trans,octa-cis-undecaprenyl diphosphate + GDP + H(+). Its pathway is bacterial outer membrane biogenesis; LPS O-antigen biosynthesis. Mannosyltransferase involved in the biosynthesis of the repeat unit of the lipopolysaccharide (LPS) O-antigen region. Catalyzes the addition of a mannose to the rhamnosyl-galactosyl-undecaprenyl diphosphate intermediate. This is O-antigen chain mannosyltransferase RfbU from Salmonella typhimurium (strain LT2 / SGSC1412 / ATCC 700720).